A 284-amino-acid chain; its full sequence is MKLMVVSGNSGAGKSVALRVLEDLGYYCVDNLPVDLLAQFVESIQHSSQNVAVSVDIRNLPKDPSLLKNTLTELKKSHDVTVIFLDAEDKELIKRYSETRRLHPLSLIGEQCSLEQAVELEKSILCHFKEDADLVLDTTSKSIHDLSETLRSRILGRESKELVMVFESFGFKHGLPTDADYVFDVRFLPNPHWEPTLRPMTGLDKPVADYLEKHAEVIQLKEQIQHFLMTWLPALEKNNRSYLTVAIGCTGGQHRSVYITQQLGEYFKQQGQQVQIRHKTLERH.

ATP is bound at residue 8–15; the sequence is GNSGAGKS. A GTP-binding site is contributed by 56–59; the sequence is DIRN.

The protein belongs to the RapZ-like family.

Displays ATPase and GTPase activities. The polypeptide is Nucleotide-binding protein VSAL_I0495 (Aliivibrio salmonicida (strain LFI1238) (Vibrio salmonicida (strain LFI1238))).